We begin with the raw amino-acid sequence, 234 residues long: UPF0173 metal-dependent hydrolase RHECIAT_CH0001941 (234 aa).

It belongs to the UPF0173 family.

The chain is UPF0173 metal-dependent hydrolase RHECIAT_CH0001941 from Rhizobium etli (strain CIAT 652).